Consider the following 1232-residue polypeptide: MANGVIPPPGGASPLPQVRVPLEEPPLSPDVEEEDDDLGKTLAVSRFGDLISKPPAWDPEKPSRSYSERDFEFHRHTSHHTHHPLSARLPPPHKLRRLPPTSARHTRRKRKKEKTSAPPSEGTPPIQEEGGAGVDEEEEEEEEEEGESEAEPVEPPHSGTPQKAKFSIGSDEDDSPGLPGRAAVTKPLPSVGPHTDKSPQHSSSSPSPRARASRLAGEKSRPWSPSASYDLRERLCPGSALGNPGGPEQQVPTDEAEAQMLGSADLDDMKSHRLEDNPGVRRHLVKKPSRTQGGRGSPSGLAPILRRKKKKKKLDRRPHEVFVELNELMLDRSQEPHWRETARWIKFEEDVEEETERWGKPHVASLSFRSLLELRRTIAHGAALLDLEQTTLPGIAHLVVETMIVSDQIRPEDRASVLRTLLLKHSHPNDDKDSGFFPRNPSSSSMNSVLGNHHPTPSHGPDGAVPTMADDLGEPAPLWPHDPDAKEKPLHMPGGDGHRGKSLKLLEKIPEDAEATVVLVGCVPFLEQPAAAFVRLNEAVLLESVLEVPVPVRFLFVMLGPSHTSTDYHELGRSIATLMSDKLFHEAAYQADDRQDLLSAISEFLDGSIVIPPSEVEGRDLLRSVAAFQRELLRKRREREQTKVEMTTRGGYTAPGKELSLELGGSEATPEDDPLLRTGSVFGGLVRDVRRRYPHYPSDLRDALHSQCVAAVLFIYFAALSPAITFGGLLGEKTEGLMGVSELIVSTAVLGVLFSLLGAQPLLVVGFSGPLLVFEEAFFKFCRAQDLEYLTGRVWVGLWLVVFVLALVAAEGSFLVRYISPFTQEIFAFLISLIFIYETFYKLYKVFTEHPLLPFYPPEGALEGSLDAGLEPNGSALPPTEGPPSPRNQPNTALLSLILMLGTFFIAFFLRKFRNSRFLGGKARRIIGDFGIPISILVMVLVDYSITDTYTQKLTVPTGLSVTSPDKRSWFIPPLGSARPFPPWMMVAAAVPALLVLILIFMETQITALIVSQKARRLLKGSGFHLDLLLIGSLGGLCGLFGLPWLTAATVRSVTHVNALTVMRTAIAPGDKPQIQEVREQRVTGVLIASLVGLSIVMGAVLRRIPLAVLFGIFLYMGVTSLSGIQLSQRLLLILMPAKHHPEQPYVTKVKTWRMHLFTCIQLGCIALLWVVKSTAASLAFPFLLLLTVPLRHCLLPRLFQDRELQALDSEDAEPNFDEDGQDEYNELHMPV.

The segment covering 1–11 has biased composition (pro residues); it reads MANGVIPPPGG. Disordered stretches follow at residues 1–316 and 429–498; these read MANG…KLDR and NDDK…GDGH. The Cytoplasmic segment spans residues 1 to 708; the sequence is MANGVIPPPG…DLRDALHSQC (708 aa). Residues 58–75 show a composition bias toward basic and acidic residues; that stretch reads DPEKPSRSYSERDFEFHR. Composition is skewed to basic residues over residues 76 to 97 and 104 to 113; these read HTSHHTHHPLSARLPPPHKLRR and RHTRRKRKKE. Acidic residues predominate over residues 134–152; that stretch reads VDEEEEEEEEEEGESEAEP. Residues Ser-167, Ser-170, Ser-175, and Ser-198 each carry the phosphoserine modification. Residues 200–215 show a composition bias toward low complexity; it reads QHSSSSPSPRARASRL. Positions 267 to 279 are enriched in basic and acidic residues; that stretch reads DDMKSHRLEDNPG. The segment covering 280 to 289 has biased composition (basic residues); that stretch reads VRRHLVKKPS. Arg-295 carries the post-translational modification Omega-N-methylarginine. A compositionally biased stretch (basic residues) spans 305–316; sequence LRRKKKKKKLDR. Polar residues predominate over residues 440–450; the sequence is NPSSSSMNSVL. Over residues 481 to 498 the composition is skewed to basic and acidic residues; that stretch reads HDPDAKEKPLHMPGGDGH. 5 helical membrane-spanning segments follow: residues 709–731, 737–774, 794–816, 826–847, and 893–910; these read VAAVLFIYFAALSPAITFGGLLG, LMGVSELIVSTAVLGVLFSLLGAQPLLVVGFSGPLLVF, VWVGLWLVVFVLALVAAEGSFLV, IFAFLISLIFIYETFYKLYKVF, and ALLSLILMLGTFFIAFFL. The segment at 709–1232 is membrane (anion exchange); the sequence is VAAVLFIYFA…DEYNELHMPV (524 aa). Topologically, residues 911 to 925 are cytoplasmic; the sequence is RKFRNSRFLGGKARR. 5 consecutive transmembrane segments (helical) span residues 926-946, 980-1002, 1028-1049, 1083-1128, and 1155-1191; these read IIGDFGIPISILVMVLVDYSI, PFPPWMMVAAAVPALLVLILIFM, LLLIGSLGGLCGLFGLPWLTAA, VTGV…IQLS, and MHLFTCIQLGCIALLWVVKSTAASLAFPFLLLLTVPL. A lipid anchor (S-palmitoyl cysteine) is attached at Cys-1165.

The protein belongs to the anion exchanger (TC 2.A.31) family. As to expression, expressed in the heart.

It is found in the cell membrane. The catalysed reaction is hydrogencarbonate(in) + chloride(out) = hydrogencarbonate(out) + chloride(in). Sodium-independent anion exchanger which mediates the electroneutral exchange of chloride for bicarbonate ions across the cell membrane. May be involved in the regulation of intracellular pH, and the modulation of cardiac action potential. The sequence is that of Anion exchange protein 3 (SLC4A3) from Homo sapiens (Human).